The sequence spans 600 residues: Zinc finger and BTB domain-containing protein 46 (600 aa).

The BTB domain occupies 31 to 99 (CDACVVVEGK…MYSAHLALTS (69 aa)). The interval 173–222 (RRTSPANSSGDSAIASCHEGGSSYGKEDQEPKADGPDDVSSQSLWPGDVG) is disordered. Over residues 197–207 (GKEDQEPKADG) the composition is skewed to basic and acidic residues. K229 is covalently cross-linked (Glycyl lysine isopeptide (Lys-Gly) (interchain with G-Cter in SUMO2)). Position 234 is a phosphoserine (S234). The tract at residues 235–278 (PSHYGGSELPSSKDTAIQNSLSEQGSGDGWQPTGRRKNRKNKET) is disordered. The segment covering 243-259 (LPSSKDTAIQNSLSEQG) has biased composition (polar residues). C2H2-type zinc fingers lie at residues 418–436 (FKCP…LKRH) and 446–468 (YPCE…TLVH). A disordered region spans residues 513–600 (LDHGGGGEGS…EPDKDFAWIS (88 aa)). A compositionally biased stretch (acidic residues) spans 533-555 (YLEDPDDPRGEAEEELVEDEDED). Composition is skewed to basic and acidic residues over residues 556 to 574 (VAKW…LLGD) and 591 to 600 (EPDKDFAWIS).

Post-translationally, sumoylated. Desumoylation by DESI1 reverses transcriptional repression activity.

It is found in the nucleus. Functions as a transcriptional repressor for PRDM1. In Mus musculus (Mouse), this protein is Zinc finger and BTB domain-containing protein 46 (Zbtb46).